A 143-amino-acid chain; its full sequence is Large ribosomal subunit protein uL11 (143 aa).

It belongs to the universal ribosomal protein uL11 family. Part of the ribosomal stalk of the 50S ribosomal subunit. Interacts with L10 and the large rRNA to form the base of the stalk. L10 forms an elongated spine to which L12 dimers bind in a sequential fashion forming a multimeric L10(L12)X complex. Post-translationally, one or more lysine residues are methylated.

Its function is as follows. Forms part of the ribosomal stalk which helps the ribosome interact with GTP-bound translation factors. The protein is Large ribosomal subunit protein uL11 of Sphingopyxis alaskensis (strain DSM 13593 / LMG 18877 / RB2256) (Sphingomonas alaskensis).